The sequence spans 127 residues: Cytochrome c' (127 aa).

At Gln-1 the chain carries Pyrrolidone carboxylic acid. Positions 12, 13, 67, 116, 119, and 120 each coordinate heme c.

In terms of assembly, homodimer. Binds 1 heme c group covalently per subunit.

The protein localises to the periplasm. Its function is as follows. Cytochrome c' is the most widely occurring bacterial c-type cytochrome. Cytochromes c' are high-spin proteins and the heme has no sixth ligand. Their exact function is not known. The polypeptide is Cytochrome c' (Alcaligenes xylosoxydans xylosoxydans (Achromobacter xylosoxidans)).